Consider the following 159-residue polypeptide: Transcription elongation factor A protein-like 1 (159 aa).

Residues 1–120 are disordered; sequence MEKACKEPEE…PQFRGDIHGR (120 aa). The span at 17–34 shows a compositional bias: basic and acidic residues; it reads KADEERPSVEPSPEKSSP. Residues 37–54 show a composition bias toward acidic residues; that stretch reads QSSEEVSSEEEFFPDELL. Basic and acidic residues-rich tracts occupy residues 64 to 80 and 95 to 119; these read SEERPPQERLSRKDLFE and HKLEEGSFKERLARSRPQFRGDIHG.

This sequence belongs to the TFS-II family. TFA subfamily.

The protein localises to the nucleus. In terms of biological role, may be involved in transcriptional regulation. Modulates various viral and cellular promoters in a promoter context-dependent manner. Does not bind DNA directly. In Bos taurus (Bovine), this protein is Transcription elongation factor A protein-like 1.